The following is a 173-amino-acid chain: Alpha-crystallin A chain (173 aa).

M1 carries the N-acetylmethionine modification. The required for complex formation with BFSP1 and BFSP2 stretch occupies residues 1-63; the sequence is MDIAIQHPWF…RSVLDSGVSE (63 aa). A Deamidated glutamine; partial modification is found at Q6. The residue at position 45 (S45) is a Phosphoserine. Q50 is modified (deamidated glutamine; partial). In terms of domain architecture, sHSP spans 52–162; the sequence is LFRSVLDSGV…GHSERAIPVS (111 aa). K70 bears the N6-acetyllysine mark. The residue at position 90 (Q90) is a Deamidated glutamine; partial. Residue K99 is modified to N6-acetyllysine. H100 is a binding site for Zn(2+). N101 carries the post-translational modification Deamidated asparagine; partial. Residues E102 and H107 each contribute to the Zn(2+) site. S122 carries the post-translational modification Phosphoserine. Position 123 is a deamidated asparagine; partial (N123). A disordered region spans residues 144–173; it reads PKIPSGMDAGHSERAIPVSREEKPSSAPSS. Basic and acidic residues predominate over residues 153–167; the sequence is GHSERAIPVSREEKP. Residue H154 coordinates Zn(2+). The O-linked (GlcNAc) serine glycan is linked to S162.

Belongs to the small heat shock protein (HSP20) family. In terms of assembly, heteromer composed of three CRYAA and one CRYAB subunits. Inter-subunit bridging via zinc ions enhances stability, which is crucial as there is no protein turn over in the lens. Can also form homodimers and homotetramers (dimers of dimers) which serve as the building blocks of homooligomers. Within homooligomers, the zinc-binding motif is created from residues of 3 different molecules. His-100 and Glu-102 from one molecule are ligands of the zinc ion, and His-107 and His-154 residues from additional molecules complete the site with tetrahedral coordination geometry. Part of a complex required for lens intermediate filament formation composed of BFSP1, BFSP2 and CRYAA. Acetylation at Lys-70 may increase chaperone activity. Post-translationally, undergoes age-dependent proteolytical cleavage at the C-terminus.

The protein resides in the cytoplasm. The protein localises to the nucleus. Its function is as follows. Contributes to the transparency and refractive index of the lens. Acts as a chaperone, preventing aggregation of various proteins under a wide range of stress conditions. Required for the correct formation of lens intermediate filaments as part of a complex composed of BFSP1, BFSP2 and CRYAA. The polypeptide is Alpha-crystallin A chain (CRYAA) (Ceratotherium simum (White rhinoceros)).